A 563-amino-acid polypeptide reads, in one-letter code: Arginine--tRNA ligase (563 aa).

The short motif at 134–144 is the 'HIGH' region element; it reads ANPTGLLHMGN.

Belongs to the class-I aminoacyl-tRNA synthetase family. Monomer.

The protein localises to the cytoplasm. The catalysed reaction is tRNA(Arg) + L-arginine + ATP = L-arginyl-tRNA(Arg) + AMP + diphosphate. This is Arginine--tRNA ligase from Heliobacterium modesticaldum (strain ATCC 51547 / Ice1).